We begin with the raw amino-acid sequence, 93 residues long: Putative septation protein SpoVG (93 aa).

It belongs to the SpoVG family.

In terms of biological role, could be involved in septation. The polypeptide is Putative septation protein SpoVG (Lachnoclostridium phytofermentans (strain ATCC 700394 / DSM 18823 / ISDg) (Clostridium phytofermentans)).